A 231-amino-acid chain; its full sequence is Ribose-5-phosphate isomerase A (231 aa).

Residues 28 to 31 (TGST), 83 to 86 (DGAD), and 96 to 99 (KGGG) each bind substrate. Glu-105 serves as the catalytic Proton acceptor. Lys-123 is a substrate binding site.

Belongs to the ribose 5-phosphate isomerase family. Homodimer.

It catalyses the reaction aldehydo-D-ribose 5-phosphate = D-ribulose 5-phosphate. The protein operates within carbohydrate degradation; pentose phosphate pathway; D-ribose 5-phosphate from D-ribulose 5-phosphate (non-oxidative stage): step 1/1. In terms of biological role, catalyzes the reversible conversion of ribose-5-phosphate to ribulose 5-phosphate. This Sinorhizobium fredii (strain NBRC 101917 / NGR234) protein is Ribose-5-phosphate isomerase A.